We begin with the raw amino-acid sequence, 202 residues long: Small ribosomal subunit protein uS5 (202 aa).

Residues 50 to 113 (LKQEILNINV…REAKLNLTPV (64 aa)) form the S5 DRBM domain.

The protein belongs to the universal ribosomal protein uS5 family. In terms of assembly, part of the 30S ribosomal subunit. Contacts protein S4.

In terms of biological role, with S4 and S12 plays an important role in translational accuracy. The polypeptide is Small ribosomal subunit protein uS5 (Pyrobaculum islandicum (strain DSM 4184 / JCM 9189 / GEO3)).